Here is a 460-residue protein sequence, read N- to C-terminus: Argininosuccinate lyase (460 aa).

The protein belongs to the lyase 1 family. Argininosuccinate lyase subfamily.

It is found in the cytoplasm. The catalysed reaction is 2-(N(omega)-L-arginino)succinate = fumarate + L-arginine. The protein operates within amino-acid biosynthesis; L-arginine biosynthesis; L-arginine from L-ornithine and carbamoyl phosphate: step 3/3. In Desulforamulus reducens (strain ATCC BAA-1160 / DSM 100696 / MI-1) (Desulfotomaculum reducens), this protein is Argininosuccinate lyase.